Reading from the N-terminus, the 618-residue chain is UvrABC system protein C (618 aa).

The region spanning 13–92 (DKPGVYLMKN…IKKYRPKYNI (80 aa)) is the GIY-YIG domain. In terms of domain architecture, UVR spans 204–239 (LDIVENFKLNMEKAAENLEFEKAAMLRDKINIIEKI).

This sequence belongs to the UvrC family. Interacts with UvrB in an incision complex.

It is found in the cytoplasm. The UvrABC repair system catalyzes the recognition and processing of DNA lesions. UvrC both incises the 5' and 3' sides of the lesion. The N-terminal half is responsible for the 3' incision and the C-terminal half is responsible for the 5' incision. This chain is UvrABC system protein C, found in Clostridium botulinum (strain Loch Maree / Type A3).